We begin with the raw amino-acid sequence, 116 residues long: Biogenesis of lysosome-related organelles complex 1 subunit CNL1 (116 aa).

A coiled-coil region spans residues 63-95; that stretch reads DIVDVNIQSFKDILSKCEELENYFTMLDQIEMI.

It belongs to the BLOC1S4 family. Component of the biogenesis of lysosome-related organelles complex-1 (BLOC-1).

The protein resides in the cytoplasm. Component of the biogenesis of lysosome-related organelles complex-1 (BLOC-1), a complex that is involved in endosomal cargo sorting. The chain is Biogenesis of lysosome-related organelles complex 1 subunit CNL1 (CLN1) from Vanderwaltozyma polyspora (strain ATCC 22028 / DSM 70294 / BCRC 21397 / CBS 2163 / NBRC 10782 / NRRL Y-8283 / UCD 57-17) (Kluyveromyces polysporus).